Here is a 225-residue protein sequence, read N- to C-terminus: Small ribosomal subunit protein mS26 (225 aa).

This sequence belongs to the mitochondrion-specific ribosomal protein mS26 family. Component of the mitochondrial ribosome small subunit (28S) which comprises a 12S rRNA and about 30 distinct proteins.

The protein resides in the mitochondrion. The polypeptide is Small ribosomal subunit protein mS26 (mRpS26) (Drosophila melanogaster (Fruit fly)).